Reading from the N-terminus, the 509-residue chain is 3-ketoacyl-CoA synthase 11 (509 aa).

2 helical membrane passes run 36-56 (LITH…AAQI) and 75-95 (LISV…YFMT). The 290-residue stretch at 92–381 (YFMTRPRPVY…FFATLVGRKL (290 aa)) folds into the FAE domain. Active-site residues include cysteine 236, histidine 315, histidine 399, histidine 403, and asparagine 436.

The protein belongs to the thiolase-like superfamily. Chalcone/stilbene synthases family. As to expression, only expressed in guard cells. Expressed in siliques, flowers, leaves, stems, roots and seedlings.

It localises to the membrane. The enzyme catalyses a very-long-chain acyl-CoA + malonyl-CoA + H(+) = a very-long-chain 3-oxoacyl-CoA + CO2 + CoA. Its pathway is lipid metabolism; fatty acid biosynthesis. Its function is as follows. Active on both saturated and mono-unsaturated acyl chains C16 to C20. This chain is 3-ketoacyl-CoA synthase 11, found in Arabidopsis thaliana (Mouse-ear cress).